A 450-amino-acid chain; its full sequence is Glucose-6-phosphate isomerase (450 aa).

T39 bears the Phosphothreonine mark. E291 acts as the Proton donor in catalysis. Catalysis depends on residues H312 and K426.

Belongs to the GPI family.

It is found in the cytoplasm. It catalyses the reaction alpha-D-glucose 6-phosphate = beta-D-fructose 6-phosphate. It participates in carbohydrate biosynthesis; gluconeogenesis. The protein operates within carbohydrate degradation; glycolysis; D-glyceraldehyde 3-phosphate and glycerone phosphate from D-glucose: step 2/4. Its function is as follows. Catalyzes the reversible isomerization of glucose-6-phosphate to fructose-6-phosphate. The sequence is that of Glucose-6-phosphate isomerase from Bacillus cytotoxicus (strain DSM 22905 / CIP 110041 / 391-98 / NVH 391-98).